We begin with the raw amino-acid sequence, 576 residues long: Proline--tRNA ligase (576 aa).

This sequence belongs to the class-II aminoacyl-tRNA synthetase family. ProS type 1 subfamily. In terms of assembly, homodimer.

It localises to the cytoplasm. The catalysed reaction is tRNA(Pro) + L-proline + ATP = L-prolyl-tRNA(Pro) + AMP + diphosphate. Catalyzes the attachment of proline to tRNA(Pro) in a two-step reaction: proline is first activated by ATP to form Pro-AMP and then transferred to the acceptor end of tRNA(Pro). As ProRS can inadvertently accommodate and process non-cognate amino acids such as alanine and cysteine, to avoid such errors it has two additional distinct editing activities against alanine. One activity is designated as 'pretransfer' editing and involves the tRNA(Pro)-independent hydrolysis of activated Ala-AMP. The other activity is designated 'posttransfer' editing and involves deacylation of mischarged Ala-tRNA(Pro). The misacylated Cys-tRNA(Pro) is not edited by ProRS. The protein is Proline--tRNA ligase of Leptospira interrogans serogroup Icterohaemorrhagiae serovar Lai (strain 56601).